A 327-amino-acid polypeptide reads, in one-letter code: uncharacterized protein (327 aa).

The tract at residues 129-306 (TPLQNQEATT…DNKKTVTTSS (178 aa)) is disordered. Residues 130 to 144 (PLQNQEATTSPTIES) are compositionally biased toward polar residues. Basic and acidic residues-rich tracts occupy residues 184–196 (KSVE…DRNV) and 233–276 (TKDE…EKIV).

This is an uncharacterized protein from Caenorhabditis elegans.